The sequence spans 244 residues: Ribonuclease PH (244 aa).

Phosphate-binding positions include R87 and 125-127 (GTR).

This sequence belongs to the RNase PH family. As to quaternary structure, homohexameric ring arranged as a trimer of dimers.

The enzyme catalyses tRNA(n+1) + phosphate = tRNA(n) + a ribonucleoside 5'-diphosphate. Functionally, phosphorolytic 3'-5' exoribonuclease that plays an important role in tRNA 3'-end maturation. Removes nucleotide residues following the 3'-CCA terminus of tRNAs; can also add nucleotides to the ends of RNA molecules by using nucleoside diphosphates as substrates, but this may not be physiologically important. Probably plays a role in initiation of 16S rRNA degradation (leading to ribosome degradation) during starvation. The protein is Ribonuclease PH of Synechococcus sp. (strain JA-2-3B'a(2-13)) (Cyanobacteria bacterium Yellowstone B-Prime).